We begin with the raw amino-acid sequence, 229 residues long: Peptidase E (229 aa).

Active-site charge relay system residues include S120, D135, and H157.

This sequence belongs to the peptidase S51 family.

The protein resides in the cytoplasm. The catalysed reaction is Dipeptidase E catalyzes the hydrolysis of dipeptides Asp-|-Xaa. It does not act on peptides with N-terminal Glu, Asn or Gln, nor does it cleave isoaspartyl peptides.. Hydrolyzes dipeptides containing N-terminal aspartate residues. May play a role in allowing the cell to use peptide aspartate to spare carbon otherwise required for the synthesis of the aspartate family of amino acids. The chain is Peptidase E from Escherichia coli O6:K15:H31 (strain 536 / UPEC).